The sequence spans 732 residues: Elongation factor 2 (732 aa).

In terms of domain architecture, tr-type G spans 19–260 (ERIRNIGIAA…MVVKHLPNPI (242 aa)). Residues 28 to 35 (AHIDHGKT), 94 to 98 (DTPGH), and 148 to 151 (NKVD) each bind GTP. Diphthamide is present on H597.

The protein belongs to the TRAFAC class translation factor GTPase superfamily. Classic translation factor GTPase family. EF-G/EF-2 subfamily.

The protein localises to the cytoplasm. Its function is as follows. Catalyzes the GTP-dependent ribosomal translocation step during translation elongation. During this step, the ribosome changes from the pre-translocational (PRE) to the post-translocational (POST) state as the newly formed A-site-bound peptidyl-tRNA and P-site-bound deacylated tRNA move to the P and E sites, respectively. Catalyzes the coordinated movement of the two tRNA molecules, the mRNA and conformational changes in the ribosome. The sequence is that of Elongation factor 2 (fusA) from Pyrococcus abyssi (strain GE5 / Orsay).